We begin with the raw amino-acid sequence, 337 residues long: Casein kinase I isoform alpha-like (337 aa).

Lysine 8 carries the N6-acetyllysine modification. The region spanning 17 to 285 (YKLVRKIGSG…YLRQLFRILF (269 aa)) is the Protein kinase domain. Residues 23–31 (IGSGSFGDV) and lysine 46 each bind ATP. Aspartate 136 serves as the catalytic Proton acceptor. Residues 309 to 325 (AASSSGQGQQAQTQTGK) are compositionally biased toward low complexity. Positions 309-337 (AASSSGQGQQAQTQTGKQTEKNKNNVKDN) are disordered. The segment covering 326-337 (QTEKNKNNVKDN) has biased composition (basic and acidic residues).

The protein belongs to the protein kinase superfamily. CK1 Ser/Thr protein kinase family. Casein kinase I subfamily. In terms of assembly, interacts with FAM83A, FAM83B, FAM83C, FAM83D, FAM83E, FAM83F, FAM83G and FAM83H (via DUF1669).

The protein localises to the cytoplasm. The enzyme catalyses L-seryl-[protein] + ATP = O-phospho-L-seryl-[protein] + ADP + H(+). The catalysed reaction is L-threonyl-[protein] + ATP = O-phospho-L-threonyl-[protein] + ADP + H(+). Its function is as follows. Casein kinases are operationally defined by their preferential utilization of acidic proteins such as caseins as substrates. It can phosphorylate a large number of proteins. Participates in Wnt signaling. The sequence is that of Casein kinase I isoform alpha-like (CSNK1A1L) from Homo sapiens (Human).